Consider the following 91-residue polypeptide: Putative membrane protein insertion efficiency factor (91 aa).

It belongs to the UPF0161 family.

It localises to the cell inner membrane. In terms of biological role, could be involved in insertion of integral membrane proteins into the membrane. This Saccharophagus degradans (strain 2-40 / ATCC 43961 / DSM 17024) protein is Putative membrane protein insertion efficiency factor.